A 249-amino-acid chain; its full sequence is Type III pantothenate kinase (249 aa).

An ATP-binding site is contributed by 6–13 (DCGNSLIK). Substrate-binding positions include Y93 and 100–103 (GLDR). Catalysis depends on D102, which acts as the Proton acceptor. K(+) is bound at residue D122. An ATP-binding site is contributed by T125. T181 contributes to the substrate binding site.

This sequence belongs to the type III pantothenate kinase family. In terms of assembly, homodimer. NH4(+) is required as a cofactor. It depends on K(+) as a cofactor.

Its subcellular location is the cytoplasm. The catalysed reaction is (R)-pantothenate + ATP = (R)-4'-phosphopantothenate + ADP + H(+). It functions in the pathway cofactor biosynthesis; coenzyme A biosynthesis; CoA from (R)-pantothenate: step 1/5. Functionally, catalyzes the phosphorylation of pantothenate (Pan), the first step in CoA biosynthesis. The polypeptide is Type III pantothenate kinase (Pseudomonas paraeruginosa (strain DSM 24068 / PA7) (Pseudomonas aeruginosa (strain PA7))).